Here is a 298-residue protein sequence, read N- to C-terminus: S-adenosyl-L-methionine-dependent methyltransferase dpfgK (298 aa).

The protein belongs to the methyltransferase superfamily.

It functions in the pathway secondary metabolite biosynthesis; terpenoid biosynthesis. S-adenosyl-L-methionine-dependent methyltransferase; part of the gene cluster that mediates the biosynthesis of diterpenoid pyrones. The first step of the pathway is the synthesis of the alpha-pyrone moiety by the polyketide synthase dpfgA via condensation of one acetyl-CoA starter unit with 3 malonyl-CoA units and 2 methylations. The alpha-pyrone is then combined with geranylgeranyl pyrophosphate (GGPP) formed by the GGPP synthase dpfgD through the action of the prenyltransferase dpfgC to yield a linear alpha-pyrone diterpenoid. Subsequent steps in the diterpenoid pyrone biosynthetic pathway involve the decalin core formation, which is initiated by the epoxidation of the C10-C11 olefin by the FAD-dependent oxidoreductase dpfgE, and is followed by a cyclization cascade catalyzed by the terpene cyclase dpfgB. The short chain dehydrogenase/reductase dpfgG then oxidizes the 8S hydroxy group to a ketone and the short chain dehydrogenase/reductase dpfgH reduces the ketone to the 8R hydroxy group to yield higginsianin B. Higginsianin B is further methylated by the methyltransferase dpfgI to produce the intermediate named FDDP B. The cytochrome P450 monooxygenase dfgpJ then catalyzes a three-step oxidation at C-27 to generate a carboxylic acid as well as C-26 hydroxylation. Finally, methyltransferase dpfgK methylates the carboxylic acid generated by dpfgJ, yielding the final diterpenoid pyrones from the pathway which were named FDDP D and FDDP E. The protein is S-adenosyl-L-methionine-dependent methyltransferase dpfgK of Gibberella zeae (strain ATCC MYA-4620 / CBS 123657 / FGSC 9075 / NRRL 31084 / PH-1) (Wheat head blight fungus).